The sequence spans 106 residues: Gibberellin-regulated protein 12 (106 aa).

An N-terminal signal peptide occupies residues 1–22; sequence MMKLIVVFVISSLLFATQFSNG.

It belongs to the GASA family. Post-translationally, six disulfide bonds may be present.

The protein localises to the secreted. Its function is as follows. Gibberellin-regulated protein that may function in hormonal controlled steps of development such as seed germination, flowering and seed maturation. The chain is Gibberellin-regulated protein 12 (GASA12) from Arabidopsis thaliana (Mouse-ear cress).